An 885-amino-acid chain; its full sequence is DNA mismatch repair protein MutS (885 aa).

ATP is bound at residue 626-633; that stretch reads GPNMGGKS.

This sequence belongs to the DNA mismatch repair MutS family.

In terms of biological role, this protein is involved in the repair of mismatches in DNA. It is possible that it carries out the mismatch recognition step. This protein has a weak ATPase activity. The protein is DNA mismatch repair protein MutS of Burkholderia lata (strain ATCC 17760 / DSM 23089 / LMG 22485 / NCIMB 9086 / R18194 / 383).